A 333-amino-acid polypeptide reads, in one-letter code: D-lactate dehydrogenase (333 aa).

NAD(+)-binding positions include 156–157 (HI), D176, 207–208 (VP), N213, 234–236 (VSR), and D260. R236 is an active-site residue. E265 is a catalytic residue. The Proton donor role is filled by H297.

It belongs to the D-isomer specific 2-hydroxyacid dehydrogenase family. As to quaternary structure, homodimer.

It catalyses the reaction (R)-lactate + NAD(+) = pyruvate + NADH + H(+). The chain is D-lactate dehydrogenase (ldhA) from Lactobacillus delbrueckii subsp. bulgaricus (strain ATCC 11842 / DSM 20081 / BCRC 10696 / JCM 1002 / NBRC 13953 / NCIMB 11778 / NCTC 12712 / WDCM 00102 / Lb 14).